The sequence spans 627 residues: MSVISILPLASKSCLYKSLMSSTHELKALCRPIATLGMCRRGKSVMASKSTSLTTAVSDDGVQRRIGDHHSNLWDDNFIQSLSSPYGASSYGERAERLIGEVKEIFNSLSRTDGELVSHVDDLLQHLSMVDNVERLGIDRHFQTEIKVSLDYVYSYWSEKGIGSGRDIVCTDLNTTALGFRILRLHGYTVFPDVFEHFKDQMGRIACSDNHTERQISSILNLFRASLIAFPGEKVMEEAEIFSATYLKEALQTIPVSSLSQEIQYVLQYRWHSNLPRLEARTYIDILQENTKNQMLDVNTKKVLELAKLEFNIFHSLQQNELKSVSRWWKESGFPDLNFIRHRHVEFYTLVSGIDMEPKHCTFRLSFVKMCHLITVLDDMYDTFGTIDELRLFTAAVKRWDPSTTECLPEYMKGVYTVLYETVNEMAQEAQKSQGRDTLSYVRQALEAYIGAYHKEAEWISSGYLPTFDEYFENGKVSSGHRIATLQPTFMLDIPFPHHVLQEIDFPSKFNDFACSILRLRGDTRCYQADRARGEEASCISCYMKDNPGSTQEDALNHINNMIEETIKKLNWELLKPDNNVPISSKKHAFDINRGLHHFYNYRDGYTVASNETKNLVIKTVLEPVPM.

The N-terminal 36 residues, 1 to 36 (MSVISILPLASKSCLYKSLMSSTHELKALCRPIATL), are a transit peptide targeting the chloroplast. Positions 378, 382, and 530 each coordinate Mg(2+). Positions 378–382 (DDMYD) match the DDXXD motif motif.

This sequence belongs to the terpene synthase family. Tpsd subfamily. It depends on Mg(2+) as a cofactor. Mn(2+) serves as cofactor.

Its subcellular location is the plastid. It localises to the chloroplast. It carries out the reaction (2E)-geranyl diphosphate = (+)-car-3-ene + diphosphate. It participates in terpene metabolism; oleoresin biosynthesis. Functionally, terpene synthase (TPS) involved in defensive oleoresin formation in conifers in response to insect attack or other injury. The polypeptide is Carene synthase, chloroplastic (JF67) (Picea abies (Norway spruce)).